Consider the following 573-residue polypeptide: E3 ubiquitin-protein ligase TRIM23 (573 aa).

Residues 31 to 76 form an RING-type; degenerate zinc finger; sequence CGVCEDVFSLQGDKVPRLLLCGHTVCHDCLTRLPLHGRAIRCPFDR. The B box-type; degenerate zinc-finger motif lies at 122–168; it reads ESIIRCDEDEAHVASVYCTVCATHLCSECSQVTHSTKTLAKHRRVPL. A coiled-coil region spans residues 351–378; sequence RVVLAKQEITRLLETLQKQQQQFTEVAD. Residues 390–573 are ARF-like; sequence FTKDNRVYHG…LVAAGVLDVA (184 aa). GTP-binding positions include 411 to 418, 454 to 458, and 513 to 516; these read LDGAGKTT, VGGKH, and KQDV.

The protein in the C-terminal section; belongs to the small GTPase superfamily. Arf family. Homodimer. Interacts with PSCD1. Interacts with UBE2D2. Interacts with TBK1 (via N-terminal kinase domain) and p62/SQSTM1.

It localises to the cytoplasm. The protein resides in the endomembrane system. Its subcellular location is the golgi apparatus membrane. The protein localises to the lysosome membrane. The catalysed reaction is S-ubiquitinyl-[E2 ubiquitin-conjugating enzyme]-L-cysteine + [acceptor protein]-L-lysine = [E2 ubiquitin-conjugating enzyme]-L-cysteine + N(6)-ubiquitinyl-[acceptor protein]-L-lysine.. The protein operates within protein modification; protein ubiquitination. Functionally, acts as an E3 ubiquitin-protein ligase. Plays an essential role in autophagy activation during viral infection. Mechanistically, activates TANK-binding kinase 1/TBK1 by facilitating its dimerization and ability to phosphorylate the selective autophagy receptor SQSTM1. In order to achieve this function, TRIM23 mediates 'Lys-27'-linked auto-ubiquitination of its ADP-ribosylation factor (ARF) domain to induce its GTPase activity and its recruitment to autophagosomes. The protein is E3 ubiquitin-protein ligase TRIM23 (Trim23) of Rattus norvegicus (Rat).